We begin with the raw amino-acid sequence, 441 residues long: Cobyrinate a,c-diamide synthase (441 aa).

The region spanning 243–434 (TVAVADDAAF…AHVHPESTAF (192 aa)) is the GATase cobBQ-type domain. Cysteine 323 acts as the Nucleophile in catalysis.

This sequence belongs to the CobB/CbiA family. The cofactor is Mg(2+).

The catalysed reaction is cob(II)yrinate + 2 L-glutamine + 2 ATP + 2 H2O = cob(II)yrinate a,c diamide + 2 L-glutamate + 2 ADP + 2 phosphate + 2 H(+). The protein operates within cofactor biosynthesis; adenosylcobalamin biosynthesis; cob(II)yrinate a,c-diamide from sirohydrochlorin (anaerobic route): step 10/10. Functionally, catalyzes the ATP-dependent amidation of the two carboxylate groups at positions a and c of cobyrinate, using either L-glutamine or ammonia as the nitrogen source. This chain is Cobyrinate a,c-diamide synthase, found in Halobacterium salinarum (strain ATCC 700922 / JCM 11081 / NRC-1) (Halobacterium halobium).